A 272-amino-acid polypeptide reads, in one-letter code: Inositol monophosphatase (272 aa).

Mg(2+) is bound by residues Glu71, Asp90, Ile92, and Asp93. Substrate is bound at residue Glu71. Residues Ile92–Thr95, Gly194–Ala196, Glu213, and Asp220 contribute to the substrate site. Asp220 is a Mg(2+) binding site.

Belongs to the inositol monophosphatase superfamily. Mg(2+) is required as a cofactor.

Its subcellular location is the cytoplasm. The enzyme catalyses a myo-inositol phosphate + H2O = myo-inositol + phosphate. The catalysed reaction is alpha-D-galactose 1-phosphate + H2O = D-galactose + phosphate. Its pathway is polyol metabolism; myo-inositol biosynthesis; myo-inositol from D-glucose 6-phosphate: step 2/2. Inhibited by Li(+), Ca(2+) and Mn(2+), but also by Mg(2+) at concentrations above 3 mM. In terms of biological role, responsible for the provision of inositol required for synthesis of phosphatidylinositol and polyphosphoinositides. Has broad substrate specificity and can use myo-inositol monophosphates, myo-inositol 1,3-diphosphate, myo-inositol 1,4-diphosphate, scyllo-inositol-phosphate, D-galactose 1-phosphate, glucose-1-phosphate, glucose-6-phosphate, fructose-1-phosphate, beta-glycerophosphate, and 2'-AMP as substrates. The sequence is that of Inositol monophosphatase (impa1) from Dictyostelium discoideum (Social amoeba).